Consider the following 203-residue polypeptide: NAD(P)H dehydrogenase (quinone) (203 aa).

One can recognise a Flavodoxin-like domain in the interval 3–194; that stretch reads IMVVYYSAYG…AGANFQGRHV (192 aa). Residues 9 to 14 and 82 to 84 each bind FMN; these read SAYGHV and ARF. An NAD(+)-binding site is contributed by Y11. Residue W102 participates in substrate binding. Residues 117-123 and H138 each bind FMN; that span reads STGTQHG.

It belongs to the WrbA family. FMN is required as a cofactor.

The catalysed reaction is a quinone + NADH + H(+) = a quinol + NAD(+). It catalyses the reaction a quinone + NADPH + H(+) = a quinol + NADP(+). The protein is NAD(P)H dehydrogenase (quinone) of Syntrophus aciditrophicus (strain SB).